The chain runs to 620 residues: Pentatricopeptide repeat-containing protein At5g66520 (620 aa).

PPR repeat units follow at residues aspartate 79 to histidine 113, asparagine 114 to asparagine 148, aspartate 149 to proline 179, aspartate 180 to lysine 210, asparagine 211 to proline 245, aspartate 246 to methionine 280, aspartate 281 to lysine 311, serine 312 to proline 346, asparagine 347 to proline 382, and threonine 383 to lysine 413. The segment at isoleucine 418–glutamate 493 is type E motif. The tract at residues glycine 494–glutamate 524 is type E(+) motif. Positions glutamate 525–tryptophan 620 are type DYW motif.

This sequence belongs to the PPR family. PCMP-H subfamily.

This Arabidopsis thaliana (Mouse-ear cress) protein is Pentatricopeptide repeat-containing protein At5g66520 (PCMP-H61).